A 114-amino-acid polypeptide reads, in one-letter code: Phosphoribosyl-AMP cyclohydrolase (114 aa).

Residue aspartate 76 participates in Mg(2+) binding. A Zn(2+)-binding site is contributed by cysteine 77. Mg(2+) contacts are provided by aspartate 78 and aspartate 80. Cysteine 93 and cysteine 100 together coordinate Zn(2+).

The protein belongs to the PRA-CH family. In terms of assembly, homodimer. Mg(2+) is required as a cofactor. Requires Zn(2+) as cofactor.

It is found in the cytoplasm. It carries out the reaction 1-(5-phospho-beta-D-ribosyl)-5'-AMP + H2O = 1-(5-phospho-beta-D-ribosyl)-5-[(5-phospho-beta-D-ribosylamino)methylideneamino]imidazole-4-carboxamide. It participates in amino-acid biosynthesis; L-histidine biosynthesis; L-histidine from 5-phospho-alpha-D-ribose 1-diphosphate: step 3/9. In terms of biological role, catalyzes the hydrolysis of the adenine ring of phosphoribosyl-AMP. In Streptococcus sanguinis (strain SK36), this protein is Phosphoribosyl-AMP cyclohydrolase.